Reading from the N-terminus, the 1958-residue chain is Autophagy-related protein 2 (1958 aa).

Positions 30–121 constitute a Chorein N-terminal domain; that stretch reads RFLSYVLKRT…SLDTLTLDFT (92 aa). Disordered regions lie at residues 286-319 and 360-412; these read QRKPPSLVIPQRQSLEPSVSSSTSTASTSSGNDY and LSQP…GIPV. Low complexity predominate over residues 303-315; sequence SVSSSTSTASTSS. Over residues 397–406 the composition is skewed to polar residues; sequence ETPTPETKPQ.

This sequence belongs to the ATG2 family.

The protein resides in the preautophagosomal structure membrane. The protein localises to the endoplasmic reticulum membrane. The enzyme catalyses a 1,2-diacyl-sn-glycero-3-phosphocholine(in) = a 1,2-diacyl-sn-glycero-3-phosphocholine(out). It catalyses the reaction a 1,2-diacyl-sn-glycero-3-phospho-L-serine(in) = a 1,2-diacyl-sn-glycero-3-phospho-L-serine(out). The catalysed reaction is a 1,2-diacyl-sn-glycero-3-phosphoethanolamine(in) = a 1,2-diacyl-sn-glycero-3-phosphoethanolamine(out). Its function is as follows. Lipid transfer protein required for autophagosome completion and peroxisome degradation. Tethers the edge of the isolation membrane (IM) to the endoplasmic reticulum (ER) and mediates direct lipid transfer from ER to IM for IM expansion. ATG2 binds to the ER exit site (ERES), which is the membrane source for autophagosome formation, using basic residues in its N-terminal region (NR) and to the expanding edge of the IM through its C-terminal region. The latter binding is assisted by an ATG18-PtdIns3P interaction. ATG2 then extracts phospholipids from the membrane source using its NR and transfers them to ATG9 to the IM through its predicted beta-sheet-rich structure for membrane expansion. The polypeptide is Autophagy-related protein 2 (ATG2) (Cryptococcus neoformans var. neoformans serotype D (strain JEC21 / ATCC MYA-565) (Filobasidiella neoformans)).